Reading from the N-terminus, the 1172-residue chain is WD repeat-containing protein 48 homolog (1172 aa).

A disordered region spans residues 1-115 (MYEYYSTGKI…HSYGGGGGGT (115 aa)). Polar residues predominate over residues 13–36 (LPQQVDSNGINSKPMNSSPSTPIP). A compositionally biased stretch (low complexity) spans 37–63 (NNNNNNNNNNNNNNNNNNNNNNNNNNN). Positions 64–89 (RNKSQQSFYLNNNNRNCGFSSPTKPQ) are enriched in polar residues. Residues 90–107 (YNNNNNNNNNNNSNYNHS) show a composition bias toward low complexity. 7 WD repeats span residues 152 to 202 (RHCF…GFKF), 208 to 246 (DHTD…CVNS), 249 to 548 (FHDD…SPMF), 560 to 599 (GEGI…KIFK), 602 to 641 (GHTD…CIQV), 645 to 683 (LHTD…QSRL), and 686 to 727 (RENE…NQSI). Residues 341–365 (ISTNNNNNNSSSSNNNNNNNNNNNN) show a composition bias toward low complexity. The tract at residues 341–544 (ISTNNNNNNS…NDNNNLNKKF (204 aa)) is disordered. Composition is skewed to polar residues over residues 366-377 (GQTNTHENTAET), 388-408 (QLSS…NFRN), and 417-434 (PPSS…SNGR). The segment covering 435 to 485 (NVNNRENNNNNNNNNNNNNNNNNNNNNNNNNNNNNNNNNINNNNHENNGNV) has biased composition (low complexity). The segment covering 486 to 503 (DVDDEDDDDDDDDDDDDD) has biased composition (acidic residues). A compositionally biased stretch (basic and acidic residues) spans 504-513 (CNKNKKKYDD). Over residues 514–543 (NNNNNNYNNNNNKKNNSNDNNNDNNNLNKK) the composition is skewed to low complexity. Positions 745 to 769 (NNNNNNNNNNNNNNNNNNNNNNNNN) are enriched in low complexity. A disordered region spans residues 745–775 (NNNNNNNNNNNNNNNNNNNNNNNNNNREKLS). The WD 8 repeat unit spans residues 794–833 (QGRAGIIKNQVLNNRRQVLTKDNDNNVQLWDITKGKEIES). Residues 926 to 986 (ELNHSNDSVN…TNSTTPNSGR (61 aa)) form a disordered region. Low complexity predominate over residues 930–984 (SNDSVNSSLSSNTSGDNNNNNYNNYNNYNNNNNNGLQKSSSSSSIVSTNSTTPNS).

The protein belongs to the WD repeat WDR48 family.

The sequence is that of WD repeat-containing protein 48 homolog from Dictyostelium discoideum (Social amoeba).